The primary structure comprises 304 residues: MSDLVLTSTEAITQGSQSFATAAKLMPPGIRDDTVMLYAWCRHADDVIDGQALGSRPEAVNDPQARLDGLRADTLAALQGDGPVTPPFAALRAVARRHDFPQAWPMDLIEGFAMDVEARDYRTLDDVLEYSYHVAGIVGVMMARVMGVRDDPVLDRACDLGLAFQLTNIARDVIDDARIGRCYLPGDWLDQAGARVDGPVPSPELYTVILRLLDAAELYYASARVGLADLPPRCAWSIAAALRIYRAIGLRIRKGGPEAYRQRISTSKAAKIGLLGIGGWDVARSRLPGAGVSRQGLWTRPHHA.

Belongs to the phytoene/squalene synthase family. Requires ATP as cofactor. It depends on Mn(2+) as a cofactor. Mg(2+) serves as cofactor.

The enzyme catalyses 2 (2E,6E,10E)-geranylgeranyl diphosphate = 15-cis-phytoene + 2 diphosphate. Its pathway is carotenoid biosynthesis; astaxanthin biosynthesis. It functions in the pathway carotenoid biosynthesis; phytoene biosynthesis. Its function is as follows. Involved in the biosynthesis of carotenoids for the production of astaxanthin. Catalyzes the condensation of two molecules of geranylgeranyl diphosphate (GGPP) to give prephytoene diphosphate (PPPP) and the subsequent rearrangement of the cyclopropylcarbinyl intermediate to yield 15-cis phytoene. The polypeptide is 15-cis-phytoene synthase (crtB) (Paracoccus sp. (strain N81106 / MBIC 01143) (Agrobacterium aurantiacum)).